A 423-amino-acid chain; its full sequence is MAICQFFLQGRCRFGDRCWNEHPGARGAGGGRQQPQQQPSGNNRRGWNTTSQRYSNVIQPSSFSKSTPWGGSRDQEKPYFSSFDSGASTNRKEGFGLSENPFASLSPDEQKDEKKLLEGIVKDMEVWESSGQWMFSVYSPVKKKPNISGFTDISPEELRLEYHNFLTSNNLQSYLNSVQRLINQWRNRVNELKSLNISTKVALLSDVKDGVNQAAPAFGFGSSQAATFMSPGFPVNNSSSDNAQNFSFKTNSGFAAASSGSPAGFGSSPAFGAAASTSSGISTSAPAFGFGKPEVTSAASFSFKSPAASSFGSPGFSGLPASLATGPVRAPVAPAFGGGSSVAGFGSPGSHSHTAFSKPSSDTFGNSSISTSLSASSSIIATDNVLFTPRDKLTVEELEQFQSKKFTLGKIPLKPPPLELLNV.

A C3H1-type zinc finger spans residues 1 to 25 (MAICQFFLQGRCRFGDRCWNEHPGA). Residues 14 to 15 (FG) form an FG 1 repeat. Positions 24-85 (GARGAGGGRQ…EKPYFSSFDS (62 aa)) are disordered. Residues 40–69 (SGNNRRGWNTTSQRYSNVIQPSSFSKSTPW) are compositionally biased toward polar residues. The interaction with HIV-1 Vpr stretch occupies residues 94–170 (GFGLSENPFA…EYHNFLTSNN (77 aa)). Residues 95-96 (FG) form an FG 2 repeat. Ser-106 bears the Phosphoserine mark. FG repeat units follow at residues 218–219 (FG), 220–221 (FG), 265–266 (FG), 271–272 (FG), 288–289 (FG), 290–291 (FG), 311–312 (FG), 336–337 (FG), 345–346 (FG), and 364–365 (FG). The interval 365–423 (GNSSISTSLSASSSIIATDNVLFTPRDKLTVEELEQFQSKKFTLGKIPLKPPPLELLNV) is interaction with GLE1.

As to quaternary structure, probable component of the nuclear pore complex (NPC). Interacts with nuclear export protein NXF1. Interacts with GLE1. Able to form a heterotrimer with NUP155 and GLE1 in vitro. Interacts with XPO1. In terms of assembly, (Microbial infection) Interacts with the HIV-1 virus proteins Rev and Vpr. The interaction with HIV-1 Rev, a protein that mediates nuclear export of unspliced viral RNAs, suggests that its function may be bypassed by the HIV-1 virus. Post-translationally, O-glycosylated. Ubiquitously expressed.

Its subcellular location is the nucleus. It is found in the nuclear pore complex. The protein resides in the nucleus membrane. Its function is as follows. Required for the export of mRNAs containing poly(A) tails from the nucleus into the cytoplasm. (Microbial infection) In case of infection by HIV-1, it may participate in the docking of viral Vpr at the nuclear envelope. The protein is Nucleoporin NUP42 of Homo sapiens (Human).